We begin with the raw amino-acid sequence, 145 residues long: Actin-depolymerizing factor 11 (145 aa).

The 135-residue stretch at 11 to 145 (SSGIGVAAEC…DIELLRERAH (135 aa)) folds into the ADF-H domain.

Belongs to the actin-binding proteins ADF family.

Its function is as follows. Actin-depolymerizing protein. Severs actin filaments (F-actin) and binds to actin monomers. This is Actin-depolymerizing factor 11 (ADF11) from Oryza sativa subsp. japonica (Rice).